The following is a 382-amino-acid chain: Prolargin (382 aa).

The first 20 residues, 1-20 (MRSPLCWLLPLLILASVAQG), serve as a signal peptide directing secretion. The disordered stretch occupies residues 19–66 (QGQPTRRPRPGTGPGRRPRPRPRPTPSFPQPDEPAEPTDLPPPLPPGP). 2 stretches are compositionally biased toward pro residues: residues 41-50 (RPTPSFPQPD) and 57-66 (DLPPPLPPGP). 12 LRR repeats span residues 95-114 (RKVP…NNFI), 115-138 (TELP…NNRI), 139-162 (RKID…KNQL), 163-183 (EEVP…QNHI), 184-207 (SRIP…HNRL), 208-233 (SDGV…HNIL), 234-254 (RKMP…SNKI), 255-278 (ETIP…YNKL), 279-303 (TDRG…HNRI), 304-323 (SSVP…NNSI), 324-362 (EKIN…GNYL), and 363-382 (KPPI…SVVI). Asn-124 carries N-linked (GlcNAc...) asparagine glycosylation. Residues Asn-289, Asn-320, and Asn-327 are each glycosylated (N-linked (GlcNAc...) asparagine). Cys-332 and Cys-373 are joined by a disulfide.

It belongs to the small leucine-rich proteoglycan (SLRP) family. SLRP class II subfamily. In terms of assembly, binds the basement membrane heparan sulfate proteoglycan perlecan and triple helical collagens type I and type II. In terms of processing, glycosylated; contains heparan sulfate. In terms of tissue distribution, connective tissue.

Its subcellular location is the secreted. It is found in the extracellular space. The protein localises to the extracellular matrix. Its function is as follows. May anchor basement membranes to the underlying connective tissue. The sequence is that of Prolargin (PRELP) from Homo sapiens (Human).